We begin with the raw amino-acid sequence, 660 residues long: Peroxisomal acyl-coenzyme A oxidase 1 (660 aa).

Ser-26 is modified (phosphoserine). Lys-89 and Lys-90 each carry N6-succinyllysine. FAD is bound by residues Thr-139 and Gly-178. At Lys-216 the chain carries N6-acetyllysine. Position 241 is an N6-succinyllysine (Lys-241). Residues Lys-255, Lys-267, and Lys-272 each carry the N6-acetyllysine modification. An N6-succinyllysine modification is found at Lys-349. Glu-421 functions as the Proton acceptor in the catalytic mechanism. Residues Lys-437 and Lys-446 each carry the N6-acetyllysine; alternate modification. An N6-succinyllysine; alternate mark is found at Lys-437 and Lys-446. Lys-500 carries the post-translational modification N6-acetyllysine. The residue at position 512 (Lys-512) is an N6-acetyllysine; alternate. At Lys-512 the chain carries N6-succinyllysine; alternate. Lys-542 carries the post-translational modification N6-succinyllysine. Position 637 is an N6-acetyllysine; alternate (Lys-637). Lys-637 carries the N6-succinyllysine; alternate modification. Lys-643 carries the N6-succinyllysine modification. Ser-649 carries the phosphoserine modification. Residue Lys-651 is modified to N6-acetyllysine. At Lys-654 the chain carries N6-succinyllysine. The Microbody targeting signal signature appears at 658–660 (SKL).

It belongs to the acyl-CoA oxidase family. In terms of assembly, homodimer. Interacts with LONP2. The cofactor is FAD.

It is found in the peroxisome. It carries out the reaction a 2,3-saturated acyl-CoA + O2 = a (2E)-enoyl-CoA + H2O2. The catalysed reaction is hexadecanoyl-CoA + O2 = (2E)-hexadecenoyl-CoA + H2O2. It catalyses the reaction dodecanoyl-CoA + O2 = (2E)-dodecenoyl-CoA + H2O2. The enzyme catalyses octanoyl-CoA + O2 = (2E)-octenoyl-CoA + H2O2. It carries out the reaction decanoyl-CoA + O2 = (2E)-decenoyl-CoA + H2O2. The catalysed reaction is tetradecanoyl-CoA + O2 = (2E)-tetradecenoyl-CoA + H2O2. It catalyses the reaction hexadecanedioyl-CoA + O2 = (2E)-hexadecenedioyl-CoA + H2O2. The enzyme catalyses tetracosanoyl-CoA + O2 = (2E)-tetracosenoyl-CoA + H2O2. It carries out the reaction glutaryl-CoA + O2 = (2E)-glutaconyl-CoA + H2O2. The catalysed reaction is hexanoyl-CoA + O2 = (2E)-hexenoyl-CoA + H2O2. It catalyses the reaction octadecanoyl-CoA + O2 = (2E)-octadecenoyl-CoA + H2O2. The enzyme catalyses (5Z,8Z,11Z,14Z,17Z)-eicosapentaenoyl-CoA + O2 = (2E,5Z,8Z,11Z,14Z,17Z)-icosahexaenoyl-CoA + H2O2. It carries out the reaction (6Z,9Z,12Z,15Z,18Z,21Z)-tetracosahexaenoyl-CoA + O2 = (2E,6Z,9Z,12Z,15Z,18Z,21Z)-tetracosaheptaenoyl-CoA + H2O2. It functions in the pathway lipid metabolism; peroxisomal fatty acid beta-oxidation. Its function is as follows. Involved in the initial and rate-limiting step of peroxisomal beta-oxidation of straight-chain saturated and unsaturated very-long-chain fatty acids. Catalyzes the desaturation of fatty acyl-CoAs such as palmitoyl-CoA (hexadecanoyl-CoA) to 2-trans-enoyl-CoAs ((2E)-enoyl-CoAs) such as (2E)-hexadecenoyl-CoA, and donates electrons directly to molecular oxygen (O(2)), thereby producing hydrogen peroxide (H(2)O(2)). Functionally, shows highest activity against medium-chain fatty acyl-CoAs. Shows optimum activity with a chain length of 10 carbons (decanoyl-CoA) in vitro. In terms of biological role, is active against a much broader range of substrates and shows activity towards long-chain acyl-CoAs. The sequence is that of Peroxisomal acyl-coenzyme A oxidase 1 from Pongo abelii (Sumatran orangutan).